We begin with the raw amino-acid sequence, 536 residues long: Glycine--tRNA ligase (536 aa).

An insert region spans residues 56–67 (LVSPAGAPSTFE). Substrate is bound by residues R106 and E213. ATP-binding positions include 245 to 247 (RNE), 255 to 260 (FRSREF), and 333 to 334 (EL). Residue 260-264 (FEQME) participates in substrate binding. The tract at residues 350–372 (EGKLDPATNPMTVELNEHGKPKH) is insert. Substrate is bound at residue 396-400 (EPSAG). 400-403 (GADR) contributes to the ATP binding site.

It belongs to the class-II aminoacyl-tRNA synthetase family. Homodimer.

It localises to the cytoplasm. It catalyses the reaction tRNA(Gly) + glycine + ATP = glycyl-tRNA(Gly) + AMP + diphosphate. Catalyzes the attachment of glycine to tRNA(Gly). The polypeptide is Glycine--tRNA ligase (Rhodopirellula baltica (strain DSM 10527 / NCIMB 13988 / SH1)).